A 156-amino-acid chain; its full sequence is Small ribosomal subunit protein uS7 (156 aa).

The protein belongs to the universal ribosomal protein uS7 family. Part of the 30S ribosomal subunit. Contacts proteins S9 and S11.

In terms of biological role, one of the primary rRNA binding proteins, it binds directly to 16S rRNA where it nucleates assembly of the head domain of the 30S subunit. Is located at the subunit interface close to the decoding center, probably blocks exit of the E-site tRNA. This Gemmatimonas aurantiaca (strain DSM 14586 / JCM 11422 / NBRC 100505 / T-27) protein is Small ribosomal subunit protein uS7.